A 351-amino-acid chain; its full sequence is Biotin synthase (351 aa).

The Radical SAM core domain occupies 44 to 262 (NRVQVSTLLS…LAVARIMMPK (219 aa)). Residues Cys-59, Cys-63, and Cys-66 each coordinate [4Fe-4S] cluster. [2Fe-2S] cluster is bound by residues Cys-103, Cys-134, Cys-194, and Arg-266.

It belongs to the radical SAM superfamily. Biotin synthase family. Homodimer. It depends on [4Fe-4S] cluster as a cofactor. [2Fe-2S] cluster serves as cofactor.

It carries out the reaction (4R,5S)-dethiobiotin + (sulfur carrier)-SH + 2 reduced [2Fe-2S]-[ferredoxin] + 2 S-adenosyl-L-methionine = (sulfur carrier)-H + biotin + 2 5'-deoxyadenosine + 2 L-methionine + 2 oxidized [2Fe-2S]-[ferredoxin]. It functions in the pathway cofactor biosynthesis; biotin biosynthesis; biotin from 7,8-diaminononanoate: step 2/2. Its function is as follows. Catalyzes the conversion of dethiobiotin (DTB) to biotin by the insertion of a sulfur atom into dethiobiotin via a radical-based mechanism. The polypeptide is Biotin synthase (Stutzerimonas stutzeri (strain A1501) (Pseudomonas stutzeri)).